The chain runs to 437 residues: GTPase Der (437 aa).

EngA-type G domains follow at residues 4–167 and 176–352; these read PVVA…PDEA and IRFS…DNHR. Residues 10 to 17, 57 to 61, 119 to 122, 182 to 189, 230 to 234, and 295 to 298 contribute to the GTP site; these read GRPNVGKS, DTGGI, NKVD, DTAGM, and NKWD. One can recognise a KH-like domain in the interval 353–437; it reads KRISSSTLND…PIKLIVRARK (85 aa).

It belongs to the TRAFAC class TrmE-Era-EngA-EngB-Septin-like GTPase superfamily. EngA (Der) GTPase family. As to quaternary structure, associates with the 50S ribosomal subunit.

In terms of biological role, GTPase that plays an essential role in the late steps of ribosome biogenesis. In Leuconostoc citreum (strain KM20), this protein is GTPase Der.